The sequence spans 567 residues: Membrane protein insertase YidC (567 aa).

Residues 3–23 (IQRIVLFAGLAIVSYLMVLAW) form a helical membrane-spanning segment. Residues 32 to 80 (TEQVAEAQSSSDSSATNSTDDMILPEDNNAGGEEFATPETGSLASTSAN) form a disordered region. Positions 40–52 (SSSDSSATNSTDD) are enriched in low complexity. The span at 70-80 (ETGSLASTSAN) shows a compositional bias: polar residues. 5 helical membrane-spanning segments follow: residues 354–374 (FGWL…FYGL), 378–398 (WGVA…HLSA), 445–465 (GGCL…WVLF), 485–505 (MDPY…QMSL), and 522–542 (PLIF…YWLV).

The protein belongs to the OXA1/ALB3/YidC family. Type 1 subfamily. Interacts with the Sec translocase complex via SecD. Specifically interacts with transmembrane segments of nascent integral membrane proteins during membrane integration.

Its subcellular location is the cell inner membrane. Functionally, required for the insertion and/or proper folding and/or complex formation of integral membrane proteins into the membrane. Involved in integration of membrane proteins that insert both dependently and independently of the Sec translocase complex, as well as at least some lipoproteins. Aids folding of multispanning membrane proteins. This chain is Membrane protein insertase YidC, found in Marinobacter nauticus (strain ATCC 700491 / DSM 11845 / VT8) (Marinobacter aquaeolei).